Reading from the N-terminus, the 501-residue chain is MLLRNRFLLLLALAGLLAFLSLSLQFFSRWLPVSLQLKTEMQVFPEFPVRLIQVGQGREEGLGAKNRKRIMPEPLTEPPALNPLYEANLYCNTPGAKERSMEGHAPPNLKLLSVQVIIRHGDRYPLYTIPKTKRPDIDCVLEPGRKPSHPHLTDFISHMSKGVDTQMDGTLGSLPRLPNHILCEMGELTQTGVVQHLRNGQLLKEIYLKKHRLLTSAWTAKHLYFESTGKSRTLQSGLALLYSLLPNFDWKKINVKHQWSTIFCSNHCDCPMRNHYLEEEQRRQYNFRVKNSLLEKTYINMAKIVGIPTRQLRASNPIDSLLCNFCHNATFPCTKNGCIDLEHFKVIKTHQLEDEKERYEKQLYFKYALMATHPLLNQTANRMLRIAEGKKDELFALYSAHDVTLSPILSALGLREARFPRFAARLVFELWHDPEKANNHYVRVLYNGEDVTFQTSFCRDQLRSSKRPLCPLKKFSTFVQKDMFSSLNSTSYYDACHQRLF.

Topologically, residues 1–6 (MLLRNR) are cytoplasmic. A helical; Signal-anchor for type II membrane protein membrane pass occupies residues 7–27 (FLLLLALAGLLAFLSLSLQFF). Residues 28-501 (SRWLPVSLQL…YYDACHQRLF (474 aa)) lie on the Lumenal side of the membrane. The active-site Nucleophile is the His120. N-linked (GlcNAc...) asparagine glycosylation is found at Asn328 and Asn377. The active-site Proton donor is the Asp402. Residue Asn488 is glycosylated (N-linked (GlcNAc...) asparagine).

It belongs to the histidine acid phosphatase family.

The protein localises to the golgi apparatus membrane. The enzyme catalyses 3-O-[beta-D-GlcA-(1-&gt;3)-beta-D-Gal-(1-&gt;3)-beta-D-Gal-(1-&gt;4)-beta-D-2-O-P-Xyl]-L-seryl-[protein] + H2O = 3-O-(beta-D-GlcA-(1-&gt;3)-beta-D-Gal-(1-&gt;3)-beta-D-Gal-(1-&gt;4)-beta-D-Xyl)-L-seryl-[protein] + phosphate. Functionally, responsible for the 2-O-dephosphorylation of xylose in the glycosaminoglycan-protein linkage region of proteoglycans thereby regulating the amount of mature glycosaminoglycan (GAG) chains. Sulfated glycosaminoglycans (GAGs), including heparan sulfate and chondroitin sulfate, are synthesized on the so-called common GAG-protein linkage region (GlcUAbeta1-3Galbeta1-3Galbeta1-4Xylbeta1-O-Ser) of core proteins, which is formed by the stepwise addition of monosaccharide residues by the respective specific glycosyltransferases. Xylose 2-O-dephosphorylation during completion of linkage region formation is a prerequisite for the initiation and efficient elongation of the repeating disaccharide region of GAG chains. The sequence is that of 2-phosphoxylose phosphatase 1 from Xenopus tropicalis (Western clawed frog).